A 241-amino-acid chain; its full sequence is Urease accessory protein UreF 1 (241 aa).

Belongs to the UreF family. As to quaternary structure, ureD, UreF and UreG form a complex that acts as a GTP-hydrolysis-dependent molecular chaperone, activating the urease apoprotein by helping to assemble the nickel containing metallocenter of UreC. The UreE protein probably delivers the nickel.

The protein localises to the cytoplasm. Functionally, required for maturation of urease via the functional incorporation of the urease nickel metallocenter. In Brucella melitensis biotype 1 (strain ATCC 23456 / CCUG 17765 / NCTC 10094 / 16M), this protein is Urease accessory protein UreF 1.